Consider the following 85-residue polypeptide: Probable Thioredoxin (85 aa).

Positions 2 to 85 (VVKIEVFTSP…LFEAISDEIE (84 aa)) constitute a Glutaredoxin domain. Cys13 and Cys16 are disulfide-bonded.

The protein belongs to the glutaredoxin family.

Its subcellular location is the cytoplasm. Does not function as a glutathione-disulfide oxidoreductase in the presence of glutathione and glutathione reductase. May be a component of a ribonucleotide-reducing system distinct from the previously described systems utilizing thioredoxin or glutaredoxin. The sequence is that of Probable Thioredoxin from Methanothermobacter marburgensis (strain ATCC BAA-927 / DSM 2133 / JCM 14651 / NBRC 100331 / OCM 82 / Marburg) (Methanobacterium thermoautotrophicum).